The chain runs to 337 residues: D-alanine--D-alanine ligase (337 aa).

Residues 124–330 (KMWFSALGIP…FTEYLSLVIN (207 aa)) form the ATP-grasp domain. Residue 154–209 (ALANWGSIFIKAASQGSSVGCYKVDDSSKVAQVLKDAFGYAPYVVVEKTIKARELE) participates in ATP binding. Mg(2+) is bound by residues Asp284, Glu297, and Asn299.

The protein belongs to the D-alanine--D-alanine ligase family. Mg(2+) serves as cofactor. The cofactor is Mn(2+).

It localises to the cytoplasm. It carries out the reaction 2 D-alanine + ATP = D-alanyl-D-alanine + ADP + phosphate + H(+). It participates in cell wall biogenesis; peptidoglycan biosynthesis. In terms of biological role, cell wall formation. This Shewanella putrefaciens (strain CN-32 / ATCC BAA-453) protein is D-alanine--D-alanine ligase.